The primary structure comprises 626 residues: Transketolase-like protein 2 (626 aa).

Residues Ser41, His78, and 124 to 126 contribute to the thiamine diphosphate site; that span reads GSL. Asp156 is a binding site for Mg(2+). Residues Gly157 and Asn186 each coordinate thiamine diphosphate. Asn186 and Leu188 together coordinate Mg(2+). The thiamine diphosphate site is built by Lys248 and His262. Substrate contacts are provided by His262 and Ser349. The thiamine diphosphate site is built by Glu370 and Phe396. The active-site Proton donor is Glu370. Substrate-binding residues include His420 and Asp428. Gln432 provides a ligand contact to thiamine diphosphate.

This sequence belongs to the transketolase family. Homodimer. It depends on Mg(2+) as a cofactor. Ca(2+) serves as cofactor. The cofactor is Mn(2+). Co(2+) is required as a cofactor. Requires thiamine diphosphate as cofactor. Overexpressed in hepatoma cancer cells.

It carries out the reaction D-sedoheptulose 7-phosphate + D-glyceraldehyde 3-phosphate = aldehydo-D-ribose 5-phosphate + D-xylulose 5-phosphate. Functionally, plays an essential role in total transketolase activity and cell proliferation in cancer cells; after transfection with anti-TKTL1 siRNA, total transketolase activity dramatically decreases and proliferation was significantly inhibited in cancer cells. Plays a pivotal role in carcinogenesis. The sequence is that of Transketolase-like protein 2 (TKTL2) from Homo sapiens (Human).